The primary structure comprises 100 residues: Aspartyl/glutamyl-tRNA(Asn/Gln) amidotransferase subunit C (100 aa).

Belongs to the GatC family. In terms of assembly, heterotrimer of A, B and C subunits.

It catalyses the reaction L-glutamyl-tRNA(Gln) + L-glutamine + ATP + H2O = L-glutaminyl-tRNA(Gln) + L-glutamate + ADP + phosphate + H(+). It carries out the reaction L-aspartyl-tRNA(Asn) + L-glutamine + ATP + H2O = L-asparaginyl-tRNA(Asn) + L-glutamate + ADP + phosphate + 2 H(+). Its function is as follows. Allows the formation of correctly charged Asn-tRNA(Asn) or Gln-tRNA(Gln) through the transamidation of misacylated Asp-tRNA(Asn) or Glu-tRNA(Gln) in organisms which lack either or both of asparaginyl-tRNA or glutaminyl-tRNA synthetases. The reaction takes place in the presence of glutamine and ATP through an activated phospho-Asp-tRNA(Asn) or phospho-Glu-tRNA(Gln). The polypeptide is Aspartyl/glutamyl-tRNA(Asn/Gln) amidotransferase subunit C (Streptococcus equi subsp. zooepidemicus (strain H70)).